The primary structure comprises 956 residues: Probable hypoxanthine oxidase XdhD (956 aa).

Positions 414, 445, and 727 each coordinate Mo-molybdopterin.

Belongs to the xanthine dehydrogenase family. It depends on [2Fe-2S] cluster as a cofactor. Mo-molybdopterin serves as cofactor.

In terms of biological role, probably has no xanthine dehydrogenase activity; however deletion results in increased adenine sensitivity, suggesting that this protein contributes to the conversion of adenine to guanine nucleotides during purine salvage. The polypeptide is Probable hypoxanthine oxidase XdhD (xdhD) (Escherichia coli O157:H7).